The chain runs to 199 residues: Golgi to ER traffic protein 1 (199 aa).

At 1–11 (MLLPDLHPYTI) the chain is on the lumenal side. A helical transmembrane segment spans residues 12–31 (LLSIFIVLLLKQLVASIGKS). Over 32–115 (TIKEFVWLVY…SIDKVSNALL (84 aa)) the chain is Cytoplasmic. A coiled-coil region spans residues 66-116 (EKRAISAQDEYAKWTKLNRQADKLSAELQKLNQEIQQQKASIDKVSNALLL). The chain crosses the membrane as a helical span at residues 116-136 (LVLTTLPIWVARVLYRNTHLF). Over 137–160 (YIRQGIFPKYVEWVLALPFLPNGA) the chain is Lumenal. The chain crosses the membrane as a helical span at residues 161–177 (VGLTIWMFAVNSVVSNF). Topologically, residues 178 to 199 (AFLVSFPFAKKVSKPVRDTKIE) are cytoplasmic.

It belongs to the WRB/GET1 family. As to quaternary structure, component of the Golgi to ER traffic (GET) complex, which is composed of GET1, GET2 and GET3. Within the complex, GET1 and GET2 form a heterotetramer which is stabilized by phosphatidylinositol binding and which binds to the GET3 homodimer.

Its subcellular location is the endoplasmic reticulum membrane. It localises to the golgi apparatus membrane. Functionally, required for the post-translational delivery of tail-anchored (TA) proteins to the endoplasmic reticulum. Together with GET2, acts as a membrane receptor for soluble GET3, which recognizes and selectively binds the transmembrane domain of TA proteins in the cytosol. The GET complex cooperates with the HDEL receptor ERD2 to mediate the ATP-dependent retrieval of resident ER proteins that contain a C-terminal H-D-E-L retention signal from the Golgi to the ER. The chain is Golgi to ER traffic protein 1 from Candida dubliniensis (strain CD36 / ATCC MYA-646 / CBS 7987 / NCPF 3949 / NRRL Y-17841) (Yeast).